Here is a 303-residue protein sequence, read N- to C-terminus: Acetylglutamate kinase (303 aa).

Residues 67 to 68, R89, and N193 contribute to the substrate site; that span reads GG.

It belongs to the acetylglutamate kinase family. ArgB subfamily.

Its subcellular location is the cytoplasm. The catalysed reaction is N-acetyl-L-glutamate + ATP = N-acetyl-L-glutamyl 5-phosphate + ADP. It functions in the pathway amino-acid biosynthesis; L-arginine biosynthesis; N(2)-acetyl-L-ornithine from L-glutamate: step 2/4. Functionally, catalyzes the ATP-dependent phosphorylation of N-acetyl-L-glutamate. The polypeptide is Acetylglutamate kinase (Acinetobacter baylyi (strain ATCC 33305 / BD413 / ADP1)).